We begin with the raw amino-acid sequence, 361 residues long: Polyribonucleotide 5'-hydroxyl-kinase PH0197 (361 aa).

An ATP-binding site is contributed by 43-50 (GDVDTGKT).

Requires a divalent metal cation as cofactor.

It catalyses the reaction a 5'-end dephospho-2'-deoxyribonucleoside-DNA + ATP = a 5'-end 5'-phospho-2'-deoxyribonucleoside-DNA + ADP + H(+). It carries out the reaction a 5'-end dephospho-ribonucleoside-RNA + ATP = a 5'-end 5'-phospho-ribonucleoside-RNA + ADP + H(+). With respect to regulation, DNA kinase activity is inhibited by 250 mM sodium chloride whereas RNA kinase activity is unaffected. Functionally, polynucleotide kinase that can phosphorylate the 5'-hydroxyl groups of both single-stranded RNA (ssRNA) and single-stranded DNA (ssDNA). Exhibits a strong preference for ssRNA. This chain is Polyribonucleotide 5'-hydroxyl-kinase PH0197, found in Pyrococcus horikoshii (strain ATCC 700860 / DSM 12428 / JCM 9974 / NBRC 100139 / OT-3).